A 193-amino-acid chain; its full sequence is Cryptic protein (193 aa).

A signal peptide spans 1 to 25 (MFWRKHVRILFTVTLIWQAIHLGKG). N-linked (GlcNAc...) asparagine glycans are attached at residues N38 and N60. Intrachain disulfides connect C91–C103 and C105–C114. The region spanning 91–115 (CQNGGTCILGAFCACPKHFSGRHCE) is the EGF-like domain.

The protein belongs to the EGF-CFC (Cripto-1/FRL1/Cryptic) family.

Its subcellular location is the cell membrane. It localises to the secreted. In terms of biological role, may play a role in mesoderm and/or neural patterning during gastrulation. The protein is Cryptic protein (CFC1) of Gallus gallus (Chicken).